The following is a 363-amino-acid chain: MKVAISGGGTGGHVYPALALIRELKKVHPEAEFLYIGTEKGLEAGIVKREGIPFEAIEITGFKRSLSLENIKTVMRFLSGAKKSKQILRDFKPDVVIGTGGYVCGPVVYAAAKLKIPTLIHEQNSVAGLTNKFLSRYTDKVAICFEEVSDSFASEKIVFTGNPRASEVVGVDSEGALEAYGLVSGKPTVLVFGGSRGARGVNEAVEAILPEWNNRDFQLLYVTGDVHYEKIKDSLAELNLGYHISVQPFIYDMPKILNAVTLVVSRAGATTLAELTALGVPSILIPSPYVTANHQENNARALEKNNAAIVITEAELKNTNLMATVDSILNDETKLNGMKLSAKQMGRPDAAAKLVEAVLSIMK.

UDP-N-acetyl-alpha-D-glucosamine-binding positions include 10–12 (TGG), N124, S195, I250, and Q295.

This sequence belongs to the glycosyltransferase 28 family. MurG subfamily.

It localises to the cell membrane. It carries out the reaction di-trans,octa-cis-undecaprenyl diphospho-N-acetyl-alpha-D-muramoyl-L-alanyl-D-glutamyl-meso-2,6-diaminopimeloyl-D-alanyl-D-alanine + UDP-N-acetyl-alpha-D-glucosamine = di-trans,octa-cis-undecaprenyl diphospho-[N-acetyl-alpha-D-glucosaminyl-(1-&gt;4)]-N-acetyl-alpha-D-muramoyl-L-alanyl-D-glutamyl-meso-2,6-diaminopimeloyl-D-alanyl-D-alanine + UDP + H(+). It participates in cell wall biogenesis; peptidoglycan biosynthesis. Functionally, cell wall formation. Catalyzes the transfer of a GlcNAc subunit on undecaprenyl-pyrophosphoryl-MurNAc-pentapeptide (lipid intermediate I) to form undecaprenyl-pyrophosphoryl-MurNAc-(pentapeptide)GlcNAc (lipid intermediate II). The sequence is that of UDP-N-acetylglucosamine--N-acetylmuramyl-(pentapeptide) pyrophosphoryl-undecaprenol N-acetylglucosamine transferase from Listeria monocytogenes serotype 4a (strain HCC23).